The following is a 484-amino-acid chain: Transcription factor cghD (484 aa).

The segment at residues cysteine 21–cysteine 54 is a DNA-binding region (zn(2)-C6 fungal-type). Disordered regions lie at residues arginine 59 to alanine 117, threonine 136 to serine 174, proline 202 to threonine 242, and histidine 386 to serine 406. Residues arginine 64–threonine 76 show a composition bias toward basic and acidic residues. Residues arginine 77–leucine 107 are compositionally biased toward low complexity. The span at proline 202–threonine 213 shows a compositional bias: low complexity.

It localises to the nucleus. Its function is as follows. Transcription factor that regulates the expression of the gene cluster that mediates the biosynthesis of the tetramic acid Sch210972, a potential anti-HIV fungal natural product that contains a decalin core. The protein is Transcription factor cghD of Chaetomium globosum (strain ATCC 6205 / CBS 148.51 / DSM 1962 / NBRC 6347 / NRRL 1970) (Soil fungus).